We begin with the raw amino-acid sequence, 87 residues long: Neurotoxin Cex4 (87 aa).

An N-terminal signal peptide occupies residues 1–19; the sequence is MNSLLMITACLFLIGTVWA. Positions 20-85 constitute an LCN-type CS-alpha/beta domain; it reads KEGYLVNKST…TYPLPNKSCG (66 aa). 4 disulfide bridges follow: C31–C84, C35–C60, C44–C65, and C48–C67. Cysteine amide is present on C84. The propeptide occupies 85–87; that stretch reads GRK.

This sequence belongs to the long (4 C-C) scorpion toxin superfamily. Sodium channel inhibitor family. Beta subfamily. As to expression, expressed by the venom gland.

Its subcellular location is the secreted. In terms of biological role, beta toxins bind voltage-independently at site-4 of sodium channels (Nav) and shift the voltage of activation toward more negative potentials thereby affecting sodium channel activation and promoting spontaneous and repetitive firing. This Centruroides exilicauda (Bark scorpion) protein is Neurotoxin Cex4.